The chain runs to 187 residues: Isopentenyl-diphosphate Delta-isomerase (187 aa).

Mn(2+)-binding residues include His-36, His-43, and His-80. A Nudix hydrolase domain is found at Val-41–Glu-178. Mg(2+) is bound at residue Glu-98. Residues Glu-127 and Glu-129 each contribute to the Mn(2+) site. Glu-129 is a catalytic residue.

This sequence belongs to the IPP isomerase type 1 family. The cofactor is Mg(2+). Requires Mn(2+) as cofactor.

It localises to the cytoplasm. It catalyses the reaction isopentenyl diphosphate = dimethylallyl diphosphate. The protein operates within isoprenoid biosynthesis; dimethylallyl diphosphate biosynthesis; dimethylallyl diphosphate from isopentenyl diphosphate: step 1/1. Its function is as follows. Catalyzes the 1,3-allylic rearrangement of the homoallylic substrate isopentenyl (IPP) to its highly electrophilic allylic isomer, dimethylallyl diphosphate (DMAPP). The polypeptide is Isopentenyl-diphosphate Delta-isomerase (Haloarcula marismortui (strain ATCC 43049 / DSM 3752 / JCM 8966 / VKM B-1809) (Halobacterium marismortui)).